A 349-amino-acid polypeptide reads, in one-letter code: Aspartate-semialdehyde dehydrogenase (349 aa).

NADP(+) is bound by residues 12–15 (TGSV) and 39–40 (NS). Arg113 is a binding site for phosphate. Cys148 acts as the Acyl-thioester intermediate in catalysis. A substrate-binding site is contributed by Gln175. An NADP(+)-binding site is contributed by 178–179 (SG). Position 201 (Glu201) interacts with substrate. Lys204 contacts phosphate. Residue Arg234 participates in substrate binding. Catalysis depends on His241, which acts as the Proton acceptor. 326-327 (NT) lines the NADP(+) pocket.

Belongs to the aspartate-semialdehyde dehydrogenase family. As to quaternary structure, homodimer.

The catalysed reaction is L-aspartate 4-semialdehyde + phosphate + NADP(+) = 4-phospho-L-aspartate + NADPH + H(+). It functions in the pathway amino-acid biosynthesis; L-lysine biosynthesis via DAP pathway; (S)-tetrahydrodipicolinate from L-aspartate: step 2/4. The protein operates within amino-acid biosynthesis; L-methionine biosynthesis via de novo pathway; L-homoserine from L-aspartate: step 2/3. It participates in amino-acid biosynthesis; L-threonine biosynthesis; L-threonine from L-aspartate: step 2/5. In terms of biological role, catalyzes the NADPH-dependent formation of L-aspartate-semialdehyde (L-ASA) by the reductive dephosphorylation of L-aspartyl-4-phosphate. The sequence is that of Aspartate-semialdehyde dehydrogenase from Leptospira interrogans serogroup Icterohaemorrhagiae serovar Lai (strain 56601).